Consider the following 205-residue polypeptide: High frequency lysogenization protein HflD homolog (205 aa).

This sequence belongs to the HflD family.

It localises to the cytoplasm. Its subcellular location is the cell inner membrane. This chain is High frequency lysogenization protein HflD homolog, found in Shewanella halifaxensis (strain HAW-EB4).